Consider the following 648-residue polypeptide: 5-aminolevulinate synthase, mitochondrial (648 aa).

Residues methionine 1–leucine 26 constitute a mitochondrion transit peptide. The segment at lysine 69–serine 109 is disordered. The substrate site is built by arginine 170, serine 283, and lysine 302. Residues serine 335, histidine 363, and threonine 409 each coordinate pyridoxal 5'-phosphate. Residue lysine 412 is part of the active site. The residue at position 412 (lysine 412) is an N6-(pyridoxal phosphate)lysine. Pyridoxal 5'-phosphate-binding residues include threonine 441 and threonine 442. Threonine 527 contacts substrate.

This sequence belongs to the class-II pyridoxal-phosphate-dependent aminotransferase family. As to quaternary structure, homodimer. Requires pyridoxal 5'-phosphate as cofactor.

Its subcellular location is the mitochondrion matrix. The catalysed reaction is succinyl-CoA + glycine + H(+) = 5-aminolevulinate + CO2 + CoA. It participates in porphyrin-containing compound metabolism; protoporphyrin-IX biosynthesis; 5-aminolevulinate from glycine: step 1/1. Catalyzes the synthesis of 5-aminolevulinate (ALA) from succinyl-CoA and glycine, the first and rate-limiting step in heme biosynthesis. The polypeptide is 5-aminolevulinate synthase, mitochondrial (hemA) (Emericella nidulans (strain FGSC A4 / ATCC 38163 / CBS 112.46 / NRRL 194 / M139) (Aspergillus nidulans)).